The following is a 114-amino-acid chain: MDFNRTKGLKKDSDFRKVYKHGKSFANKYLVIYILKNKSDYSRVGISVSKKVGKAITRNRVRRLIKEAYRLNIDEKIKPGYDIVFIARVSSKDATFKDIDKSIKNLVKRTDISI.

The protein belongs to the RnpA family. In terms of assembly, consists of a catalytic RNA component (M1 or rnpB) and a protein subunit.

The catalysed reaction is Endonucleolytic cleavage of RNA, removing 5'-extranucleotides from tRNA precursor.. In terms of biological role, RNaseP catalyzes the removal of the 5'-leader sequence from pre-tRNA to produce the mature 5'-terminus. It can also cleave other RNA substrates such as 4.5S RNA. The protein component plays an auxiliary but essential role in vivo by binding to the 5'-leader sequence and broadening the substrate specificity of the ribozyme. The protein is Ribonuclease P protein component of Clostridioides difficile (strain 630) (Peptoclostridium difficile).